We begin with the raw amino-acid sequence, 407 residues long: MNLVERFLKYVSFDTQSDELTRLTPSTPGQMVFAEYLKSELESLGLEDITLDENGYLFATLPANTEKELPVIGFIAHMDTSPDMSGKNVTPRIVEKYDGSDIVLCAEENIVLSPSQFPELLDHKGEDLIVTNGKTLLGADDKAGIAEIVSAVVYLQEHPEIKHGKIRIGFNPDEEIGEGAHKFDVQKFGCEWAYTMDGGEVGELEFENFNAAAAKITFKGRNVHPGYAKHKMINSIRIANQFITMLPRHETPEHTSGYEGFYHLIGIQGDVEQSTVSYIIRDHDRNKFEDRKKEIEHLVNKINAEFGEGTATLELRDQYYNMREKIEPVMHIIDTAFAAMEAVGVKPNVKPIRGGTDGAQLSFKGLPCPNIFAGGLNFHGRYEFVPIQNMEKAMKVIVKIAELVASK.

His-77 lines the Zn(2+) pocket. Residue Asp-79 is part of the active site. Asp-140 is a binding site for Zn(2+). The active-site Proton acceptor is the Glu-174. Zn(2+) contacts are provided by Glu-175, Asp-197, and His-379.

The protein belongs to the peptidase M20B family. Zn(2+) serves as cofactor.

It localises to the cytoplasm. The catalysed reaction is Release of the N-terminal residue from a tripeptide.. Cleaves the N-terminal amino acid of tripeptides. This chain is Peptidase T, found in Bacteroides fragilis (strain YCH46).